Reading from the N-terminus, the 90-residue chain is Co-chaperonin GroES (90 aa).

Belongs to the GroES chaperonin family. Heptamer of 7 subunits arranged in a ring. Interacts with the chaperonin GroEL.

It localises to the cytoplasm. Functionally, together with the chaperonin GroEL, plays an essential role in assisting protein folding. The GroEL-GroES system forms a nano-cage that allows encapsulation of the non-native substrate proteins and provides a physical environment optimized to promote and accelerate protein folding. GroES binds to the apical surface of the GroEL ring, thereby capping the opening of the GroEL channel. This chain is Co-chaperonin GroES, found in Bacteroides thetaiotaomicron (strain ATCC 29148 / DSM 2079 / JCM 5827 / CCUG 10774 / NCTC 10582 / VPI-5482 / E50).